The sequence spans 431 residues: COBRA-like protein 4 (431 aa).

The first 20 residues, 1–20 (MRLLFSFCFFFFMIIFTATA), serve as a signal peptide directing secretion. N-linked (GlcNAc...) asparagine glycans are attached at residues Asn29, Asn154, Asn162, Asn201, Asn226, Asn306, Asn321, and Asn340. Asn414 carries the GPI-anchor amidated asparagine lipid modification. Positions 415–431 (FASFSLTILLLLFISIW) are cleaved as a propeptide — removed in mature form.

This sequence belongs to the COBRA family. In terms of tissue distribution, expressed in roots, stems, leaves, flowers and siliques.

Its subcellular location is the cell membrane. This Arabidopsis thaliana (Mouse-ear cress) protein is COBRA-like protein 4 (COBL4).